We begin with the raw amino-acid sequence, 236 residues long: Apoptosis regulator Bcl-2 (236 aa).

The BH4 motif lies at 10–30; sequence DNREIVMKYIHYKLSQRGYEW. Residue T69 is modified to Phosphothreonine; by MAPK8. The residue at position 70 (S70) is a Phosphoserine; by MAPK8 and PKC. S84 carries the post-translational modification Phosphoserine; by MAPK8. The BH3 motif lies at 90–104; sequence VHLTLRRAGDDFSRR. The BH1 signature appears at 133–152; the sequence is ELFRDGVNWGRIVAFFEFGG. A BH2 motif is present at residues 184–199; that stretch reads TWIQDNGGWDAFVELY. Residues 209–230 traverse the membrane as a helical segment; the sequence is FSWLSLKALLSLALVGACITLG.

This sequence belongs to the Bcl-2 family. In terms of assembly, forms homodimers, and heterodimers with BAX, BAD, BAK and Bcl-X(L). Heterodimerization with BAX requires intact BH1 and BH2 motifs, and is necessary for anti-apoptotic activity. Component of the complex, at least composed of LRPPRC, BECN1 and BCL2; the interactions prevent BECN1 from forming an autophagy-inducing complex with PIK3C3. Interacts with EI24. Also interacts with APAF1, BBC3, BCL2L1, BNIPL, MRPL41 and TP53BP2. Binding to FKBP8 seems to target BCL2 to the mitochondria and probably interferes with the binding of BCL2 to its targets. Interacts with BAG1 in an ATP-dependent manner. Interacts with RAF1 (the 'Ser-338' and 'Ser-339' phosphorylated form). Interacts (via the BH4 domain) with EGLN3; the interaction prevents the formation of the BAX-BCL2 complex and inhibits the anti-apoptotic activity of BCL2. Interacts with G0S2; this interaction also prevents the formation of the anti-apoptotic BAX-BCL2 complex. Interacts with RTL10/BOP. Interacts with the SCF(FBXO10) complex. Interacts (via the loop between motifs BH4 and BH3) with NLRP1 (via LRR repeats), but not with NLRP2, NLRP3, NLRP4, PYCARD, nor MEFV. Interacts with GIMAP3/IAN4, GIMAP4/IAN1 and GIMAP5/IAN5. Interacts with BCAP31. Interacts with IRF3; the interaction is inhibited by Sendai virus infection. Interacts with BECN1; thereby inhibiting autophagy in non-starvation conditions. Interacts with AMBRA1; thereby inhibiting autophagy. Phosphorylation/dephosphorylation on Ser-70 regulates anti-apoptotic activity. Growth factor-stimulated phosphorylation on Ser-70 by PKC is required for the anti-apoptosis activity and occurs during the G2/M phase of the cell cycle. In the absence of growth factors, BCL2 appears to be phosphorylated by other protein kinases such as ERKs and stress-activated kinases. Phosphorylated by MAPK8/JNK1 at Thr-69, Ser-70 and Ser-84, which stimulates starvation-induced autophagy. Dephosphorylated by protein phosphatase 2A (PP2A). In terms of processing, proteolytically cleaved by caspases during apoptosis. The cleaved protein, lacking the BH4 motif, has pro-apoptotic activity, causes the release of cytochrome c into the cytosol promoting further caspase activity. Post-translationally, monoubiquitinated by PRKN, leading to an increase in its stability. Ubiquitinated by SCF(FBXO10), leading to its degradation by the proteasome.

Its subcellular location is the mitochondrion outer membrane. It localises to the nucleus membrane. The protein localises to the endoplasmic reticulum membrane. It is found in the cytoplasm. In terms of biological role, suppresses apoptosis in a variety of cell systems including factor-dependent lymphohematopoietic and neural cells. Regulates cell death by controlling the mitochondrial membrane permeability. Appears to function in a feedback loop system with caspases. Inhibits caspase activity either by preventing the release of cytochrome c from the mitochondria and/or by binding to the apoptosis-activating factor (APAF-1). Also acts as an inhibitor of autophagy: interacts with BECN1 and AMBRA1 during non-starvation conditions and inhibits their autophagy function. May attenuate inflammation by impairing NLRP1-inflammasome activation, hence CASP1 activation and IL1B release. This Canis lupus familiaris (Dog) protein is Apoptosis regulator Bcl-2 (BCL2).